A 475-amino-acid chain; its full sequence is Trifunctional enzyme subunit beta, mitochondrial (475 aa).

The transit peptide at 1–34 (MTTILTYPFKNLPTASKWALRFSIRPLSCSSQLR) directs the protein to the mitochondrion. At K73 the chain carries N6-acetyllysine; alternate. K73 carries the N6-succinyllysine; alternate modification. C139 serves as the catalytic Acyl-thioester intermediate. An intramembrane segment occupies 174-221 (IRHSRKMRKLMLDLNKAKSMGQRLSLISKFRFNFLAPELPAVSEFSTS). Residue K189 is modified to N6-acetyllysine; alternate. N6-succinyllysine; alternate is present on K189. N6-succinyllysine is present on residues K191, K273, and K292. K294 carries the N6-acetyllysine; alternate modification. An N6-succinyllysine; alternate modification is found at K294. Residue K299 is modified to N6-acetyllysine. K333 carries the post-translational modification N6-acetyllysine; alternate. N6-succinyllysine; alternate is present on K333. An N6-acetyllysine mark is found at K349 and K362. The active-site Proton donor/acceptor is C459.

This sequence belongs to the thiolase-like superfamily. Thiolase family. Heterotetramer of 2 alpha/HADHA and 2 beta/HADHB subunits; forms the mitochondrial trifunctional enzyme. Also purified as higher order heterooligomers including a 4 alpha/HADHA and 4 beta/HADHB heterooligomer which physiological significance remains unclear. The mitochondrial trifunctional enzyme interacts with MTLN. Interacts with RSAD2/viperin.

The protein resides in the mitochondrion. It is found in the mitochondrion inner membrane. The protein localises to the mitochondrion outer membrane. It localises to the endoplasmic reticulum. It catalyses the reaction an acyl-CoA + acetyl-CoA = a 3-oxoacyl-CoA + CoA. It carries out the reaction butanoyl-CoA + acetyl-CoA = 3-oxohexanoyl-CoA + CoA. The enzyme catalyses hexanoyl-CoA + acetyl-CoA = 3-oxooctanoyl-CoA + CoA. The catalysed reaction is octanoyl-CoA + acetyl-CoA = 3-oxodecanoyl-CoA + CoA. It catalyses the reaction decanoyl-CoA + acetyl-CoA = 3-oxododecanoyl-CoA + CoA. It carries out the reaction dodecanoyl-CoA + acetyl-CoA = 3-oxotetradecanoyl-CoA + CoA. The enzyme catalyses tetradecanoyl-CoA + acetyl-CoA = 3-oxohexadecanoyl-CoA + CoA. It participates in lipid metabolism; fatty acid beta-oxidation. Its function is as follows. Mitochondrial trifunctional enzyme catalyzes the last three of the four reactions of the mitochondrial beta-oxidation pathway. The mitochondrial beta-oxidation pathway is the major energy-producing process in tissues and is performed through four consecutive reactions breaking down fatty acids into acetyl-CoA. Among the enzymes involved in this pathway, the trifunctional enzyme exhibits specificity for long-chain fatty acids. Mitochondrial trifunctional enzyme is a heterotetrameric complex composed of two proteins, the trifunctional enzyme subunit alpha/HADHA carries the 2,3-enoyl-CoA hydratase and the 3-hydroxyacyl-CoA dehydrogenase activities, while the trifunctional enzyme subunit beta/HADHB described here bears the 3-ketoacyl-CoA thiolase activity. In Pan troglodytes (Chimpanzee), this protein is Trifunctional enzyme subunit beta, mitochondrial (HADHB).